Here is a 200-residue protein sequence, read N- to C-terminus: High mobility group protein B3 (200 aa).

K3 bears the N6-acetyllysine mark. 2 consecutive DNA-binding regions (HMG box) follow at residues 9-79 and 93-161; these read PKGK…KDYG and PKRP…ADYK. C23 is subject to Cysteine sulfonic acid (-SO3H); alternate. A disulfide bridge links C23 with C45. An N6-acetyllysine mark is found at K30 and K43. C45 bears the Cysteine sulfonic acid (-SO3H); alternate mark. A disordered region spans residues 71–97; that stretch reads YDREMKDYGPAKGGKKKKDPNAPKRPP. Phosphoserine is present on S98. A Cysteine sulfonic acid (-SO3H) modification is found at C104. K112 and K139 each carry N6-acetyllysine. The interval 161-200 is disordered; the sequence is KSKGKFDGAKGPAKVARKKVEEEEEEEEEEEEEEEEEEDE. The span at 182–200 shows a compositional bias: acidic residues; that stretch reads EEEEEEEEEEEEEEEEEDE.

The protein belongs to the HMGB family. In terms of processing, reduction/oxidation of cysteine residues Cys-23, Cys-45 and Cys-104 and a possible intramolecular disulfide bond involving Cys-23 and Cys-45 give rise to different redox forms with specific functional activities in various cellular compartments: 1- fully reduced HMGB3 (HMGB3C23hC45hC104h), 2- disulfide HMGB3 (HMGB3C23-C45C104h) and 3- sulfonyl HMGB3 (HMGB3C23soC45soC104so). In terms of tissue distribution, expressed in bone marrow cells, specifically in primitive Lin-, c-kit+, Sca-1+, IL-7Ralpha- cells, and Ter119+ erythroid cells.

The protein localises to the nucleus. The protein resides in the chromosome. It is found in the cytoplasm. Multifunctional protein with various roles in different cellular compartments. May act in a redox sensitive manner. Associates with chromatin and binds DNA with a preference for non-canonical DNA structures such as single-stranded DNA. Can bend DNA and enhance DNA flexibility by looping thus providing a mechanism to promote activities on various gene promoters. Proposed to be involved in the innate immune response to nucleic acids by acting as a cytoplasmic promiscuous immunogenic DNA/RNA sensor. Negatively regulates B-cell and myeloid cell differentiation. In hematopoietic stem cells may regulate the balance between self-renewal and differentiation. Involved in negative regulation of canonical Wnt signaling. This Mus musculus (Mouse) protein is High mobility group protein B3 (Hmgb3).